Here is a 271-residue protein sequence, read N- to C-terminus: S-adenosylmethionine decarboxylase proenzyme (271 aa).

Catalysis depends on Ser121, which acts as the Schiff-base intermediate with substrate; via pyruvic acid. Position 121 is a pyruvic acid (Ser); by autocatalysis (Ser121). His126 (proton acceptor; for processing activity) is an active-site residue. Cys149 serves as the catalytic Proton donor; for catalytic activity.

The protein belongs to the prokaryotic AdoMetDC family. Type 2 subfamily. Heterooctamer of four alpha and four beta chains arranged as a tetramer of alpha/beta heterodimers. Pyruvate serves as cofactor. Post-translationally, is synthesized initially as an inactive proenzyme. Formation of the active enzyme involves a self-maturation process in which the active site pyruvoyl group is generated from an internal serine residue via an autocatalytic post-translational modification. Two non-identical subunits are generated from the proenzyme in this reaction, and the pyruvate is formed at the N-terminus of the alpha chain, which is derived from the carboxyl end of the proenzyme. The post-translation cleavage follows an unusual pathway, termed non-hydrolytic serinolysis, in which the side chain hydroxyl group of the serine supplies its oxygen atom to form the C-terminus of the beta chain, while the remainder of the serine residue undergoes an oxidative deamination to produce ammonia and the pyruvoyl group blocking the N-terminus of the alpha chain.

The catalysed reaction is S-adenosyl-L-methionine + H(+) = S-adenosyl 3-(methylsulfanyl)propylamine + CO2. It participates in amine and polyamine biosynthesis; S-adenosylmethioninamine biosynthesis; S-adenosylmethioninamine from S-adenosyl-L-methionine: step 1/1. Functionally, catalyzes the decarboxylation of S-adenosylmethionine to S-adenosylmethioninamine (dcAdoMet), the propylamine donor required for the synthesis of the polyamines spermine and spermidine from the diamine putrescine. This chain is S-adenosylmethionine decarboxylase proenzyme, found in Clostridium perfringens (strain SM101 / Type A).